The chain runs to 305 residues: Ribonuclease HIII (305 aa).

Residues 91–305 form the RNase H type-2 domain; it reads WSVIGSDEVG…ANTQKAQKLL (215 aa). A divalent metal cation contacts are provided by aspartate 97, glutamate 98, and aspartate 201.

Belongs to the RNase HII family. RnhC subfamily. Mn(2+) is required as a cofactor. It depends on Mg(2+) as a cofactor.

The protein resides in the cytoplasm. The enzyme catalyses Endonucleolytic cleavage to 5'-phosphomonoester.. Endonuclease that specifically degrades the RNA of RNA-DNA hybrids. This chain is Ribonuclease HIII, found in Enterococcus faecalis (strain ATCC 700802 / V583).